The sequence spans 146 residues: Snake venom vascular endothelial growth factor toxin (146 aa).

An N-terminal signal peptide occupies residues Met1–Gly24. Pyrrolidone carboxylic acid is present on Gln25. 3 cysteine pairs are disulfide-bonded: Cys38/Cys80, Cys69/Cys115, and Cys73/Cys117. Residues Arg118–Val146 are disordered. Residues Asn133–Val146 are compositionally biased toward basic and acidic residues.

It belongs to the PDGF/VEGF growth factor family. Snake venom VEGF subfamily. In terms of assembly, homodimer; disulfide-linked. Interacts with VEGF receptor-1 (FLT1) with a high affinity, whereas it binds to VEGF receptor-2 (KDR) with a low affinity. Does not bind VEGF receptor-3 (FLT4). In terms of tissue distribution, expressed by the venom gland.

The protein localises to the secreted. Functionally, snake venom VEGFs that may contribute to venom dispersion and prey subjugation by inducing vascular permeability and hypotension. This protein induces an increase in capillary permeability after intradermal injection, as well as a drastic hypotensive effect after intravenous injection. The hypotension is mediated by nitric oxide (NO), which is produced by VEGF-activated endothelium NO synthase. Also induces angiogenesis in vitro. Like other crotalid VEGFs, this protein interacts with VEGF receptor-1 (FLT1) with a high affinity, whereas it binds to VEGF receptor-2 (KDR) with a low affinity. In Bothrops erythromelas (Caatinga lance head), this protein is Snake venom vascular endothelial growth factor toxin.